The chain runs to 1347 residues: Protocadherin-11 X-linked (1347 aa).

Residues 1–23 form the signal peptide; it reads MDLLSGTYIFAVLLACVVFHSGA. Residues 24 to 812 lie on the Extracellular side of the membrane; it reads QEKNYTIREE…VSSPTSDYVK (789 aa). Cadherin domains are found at residues 26–139, 140–249, 250–355, 362–466, 467–570, 571–673, and 677–795; these read KNYT…APLF, PATV…HPVF, KETE…VPSI, NPVN…APVF, TQSF…SPVF, THNE…KPVF, and PSNC…APVT. N-linked (GlcNAc...) asparagine glycans are attached at residues Asn-27, Asn-48, and Asn-54. Residue Asn-344 is glycosylated (N-linked (GlcNAc...) asparagine). An N-linked (GlcNAc...) asparagine glycan is attached at Asn-553. The N-linked (GlcNAc...) asparagine glycan is linked to Asn-773. A helical membrane pass occupies residues 813–833; the sequence is ILVAAVAGTITVVVVIFITAV. The Cytoplasmic portion of the chain corresponds to 834–1347; sequence VRCRQAPHLK…DSPIMEEHPL (514 aa). Disordered stretches follow at residues 1057 to 1091, 1097 to 1116, and 1326 to 1347; these read LPEG…GYPQ, RATP…ESTF, and FTPR…EHPL.

Expressed strongly in fetal brain and brain (cortex, amygdala, thalamus, substantia nigra, hippocampus, caudate nucleus and corpus callosum). Expressed at low level in testis.

The protein resides in the cell membrane. Its function is as follows. Potential calcium-dependent cell-adhesion protein. The polypeptide is Protocadherin-11 X-linked (PCDH11X) (Homo sapiens (Human)).